The chain runs to 92 residues: UPF0250 protein Pmen_3793 (92 aa).

It belongs to the UPF0250 family.

The chain is UPF0250 protein Pmen_3793 from Ectopseudomonas mendocina (strain ymp) (Pseudomonas mendocina).